The sequence spans 43 residues: Large ribosomal subunit protein uL5 (43 aa).

It belongs to the universal ribosomal protein uL5 family. As to quaternary structure, part of the 50S ribosomal subunit; part of the 5S rRNA/L5/L18/L25 subcomplex. Contacts the 5S rRNA and the P site tRNA. Forms a bridge to the 30S subunit in the 70S ribosome.

This is one of the proteins that bind and probably mediate the attachment of the 5S RNA into the large ribosomal subunit, where it forms part of the central protuberance. In the 70S ribosome it contacts protein S13 of the 30S subunit (bridge B1b), connecting the 2 subunits; this bridge is implicated in subunit movement. Contacts the P site tRNA; the 5S rRNA and some of its associated proteins might help stabilize positioning of ribosome-bound tRNAs. The polypeptide is Large ribosomal subunit protein uL5 (rplE) (Serratia marcescens).